Consider the following 285-residue polypeptide: uncharacterized protein (285 aa).

Positions 110, 131, 133, 135, 214, and 216 each coordinate Mn(2+).

Belongs to the arginase family. Mn(2+) is required as a cofactor.

This is an uncharacterized protein from Methanothermus fervidus.